Consider the following 224-residue polypeptide: Endonuclease NucS (224 aa).

The protein belongs to the NucS endonuclease family.

It localises to the cytoplasm. In terms of biological role, cleaves both 3' and 5' ssDNA extremities of branched DNA structures. This is Endonuclease NucS from Rhodococcus erythropolis (strain PR4 / NBRC 100887).